A 505-amino-acid chain; its full sequence is Maturase K (505 aa).

Belongs to the intron maturase 2 family. MatK subfamily.

The protein localises to the plastid. It is found in the chloroplast. In terms of biological role, usually encoded in the trnK tRNA gene intron. Probably assists in splicing its own and other chloroplast group II introns. This Physcomitrium patens (Spreading-leaved earth moss) protein is Maturase K.